The following is a 198-amino-acid chain: Mediator of RNA polymerase II transcription subunit 22 (198 aa).

The interval 159–198 is disordered; it reads WGSPEMTSDPSHANHEVSDHLGSQESMQRHRNGSGTSEQS.

It belongs to the Mediator complex subunit 22 family. As to quaternary structure, component of the Mediator complex.

The protein resides in the nucleus. Its function is as follows. Component of the Mediator complex, a coactivator involved in the regulated transcription of nearly all RNA polymerase II-dependent genes. Mediator functions as a bridge to convey information from gene-specific regulatory proteins to the basal RNA polymerase II transcription machinery. Mediator is recruited to promoters by direct interactions with regulatory proteins and serves as a scaffold for the assembly of a functional preinitiation complex with RNA polymerase II and the general transcription factors. The protein is Mediator of RNA polymerase II transcription subunit 22 (med22) of Danio rerio (Zebrafish).